A 351-amino-acid chain; its full sequence is Small ribosomal subunit biogenesis GTPase RsgA 1 (351 aa).

Residues 100-258 enclose the CP-type G domain; that stretch reads LRTDAQIVAS…IIDTPGMREL (159 aa). GTP-binding positions include 148–151 and 200–208; these read SKVD and GSSGAGKST. Zn(2+) contacts are provided by Cys282, Cys287, His289, and Cys295.

The protein belongs to the TRAFAC class YlqF/YawG GTPase family. RsgA subfamily. As to quaternary structure, monomer. Associates with 30S ribosomal subunit, binds 16S rRNA. Requires Zn(2+) as cofactor.

It is found in the cytoplasm. Its function is as follows. One of several proteins that assist in the late maturation steps of the functional core of the 30S ribosomal subunit. Helps release RbfA from mature subunits. May play a role in the assembly of ribosomal proteins into the subunit. Circularly permuted GTPase that catalyzes slow GTP hydrolysis, GTPase activity is stimulated by the 30S ribosomal subunit. The chain is Small ribosomal subunit biogenesis GTPase RsgA 1 from Oceanobacillus iheyensis (strain DSM 14371 / CIP 107618 / JCM 11309 / KCTC 3954 / HTE831).